The following is a 110-amino-acid chain: IQ domain-containing protein J (110 aa).

The region spanning 47 to 67 (ESKVKIIQRAWREYLQRQDPL) is the IQ domain. Positions 63-99 (RQDPLEKRSPSPPSVSSDKLSSSVSMNTFSDSSTPVS) are disordered. Positions 76–87 (SVSSDKLSSSVS) are enriched in low complexity. Polar residues predominate over residues 88 to 99 (MNTFSDSSTPVS).

This is IQ domain-containing protein J from Mus musculus (Mouse).